We begin with the raw amino-acid sequence, 43 residues long: Protein PsbN (43 aa).

Residues 7 to 27 (VAIFISGLLVSFTGYALYTAF) traverse the membrane as a helical segment.

The protein belongs to the PsbN family.

It is found in the plastid. The protein localises to the chloroplast thylakoid membrane. May play a role in photosystem I and II biogenesis. The sequence is that of Protein PsbN from Sagittaria latifolia (Broadleaf arrowhead).